Here is a 162-residue protein sequence, read N- to C-terminus: Ribonuclease (162 aa).

A signal peptide spans 1–29 (MKKISSVFTMFALIAAILFSGFIPQQAYA). Residues 30–53 (ETPLTQTATNETATIQLTSDVHTL) constitute a propeptide that is removed on maturation. Glu125 serves as the catalytic Proton acceptor. The active-site Proton donor is His154.

It belongs to the ribonuclease N1/T1 family.

Its subcellular location is the secreted. Its function is as follows. This is a purine-specific ribonuclease. This chain is Ribonuclease, found in Bacillus intermedius.